The chain runs to 192 residues: Adenylate kinase (192 aa).

An ATP-binding site is contributed by 10–15 (GAGKGT). Residues 30–59 (STGDMLREVIAKETEVGKKAKAIISSGALV) are NMP. AMP contacts are provided by residues Thr-31, Arg-36, 57-59 (ALV), 85-88 (GYPR), and Gln-92. Positions 126–142 (RRVQETVAAGGQVRLDD) are LID. Arg-127 is an ATP binding site. Residues Arg-139 and Arg-150 each coordinate AMP. An ATP-binding site is contributed by Ile-178.

It belongs to the adenylate kinase family. As to quaternary structure, monomer.

It localises to the cytoplasm. The enzyme catalyses AMP + ATP = 2 ADP. Its pathway is purine metabolism; AMP biosynthesis via salvage pathway; AMP from ADP: step 1/1. In terms of biological role, catalyzes the reversible transfer of the terminal phosphate group between ATP and AMP. Plays an important role in cellular energy homeostasis and in adenine nucleotide metabolism. The polypeptide is Adenylate kinase (Bartonella tribocorum (strain CIP 105476 / IBS 506)).